Consider the following 485-residue polypeptide: Glutamyl-tRNA(Gln) amidotransferase subunit A (485 aa).

Catalysis depends on charge relay system residues Lys-74 and Ser-149. The active-site Acyl-ester intermediate is the Ser-173.

It belongs to the amidase family. GatA subfamily. Heterotrimer of A, B and C subunits.

The enzyme catalyses L-glutamyl-tRNA(Gln) + L-glutamine + ATP + H2O = L-glutaminyl-tRNA(Gln) + L-glutamate + ADP + phosphate + H(+). In terms of biological role, allows the formation of correctly charged Gln-tRNA(Gln) through the transamidation of misacylated Glu-tRNA(Gln) in organisms which lack glutaminyl-tRNA synthetase. The reaction takes place in the presence of glutamine and ATP through an activated gamma-phospho-Glu-tRNA(Gln). The polypeptide is Glutamyl-tRNA(Gln) amidotransferase subunit A (Janthinobacterium sp. (strain Marseille) (Minibacterium massiliensis)).